Consider the following 432-residue polypeptide: Adenylosuccinate synthetase (432 aa).

Residues 13–19 (GDEGKGK) and 41–43 (GHT) contribute to the GTP site. D14 serves as the catalytic Proton acceptor. The Mg(2+) site is built by D14 and G41. Residues 14-17 (DEGK), 39-42 (NAGH), T130, R144, Q225, T240, and R304 contribute to the IMP site. Catalysis depends on H42, which acts as the Proton donor. 300 to 306 (ATTGRRR) serves as a coordination point for substrate. GTP contacts are provided by residues R306, 332 to 334 (KLD), and 415 to 417 (STG).

It belongs to the adenylosuccinate synthetase family. Homodimer. Requires Mg(2+) as cofactor.

The protein resides in the cytoplasm. It catalyses the reaction IMP + L-aspartate + GTP = N(6)-(1,2-dicarboxyethyl)-AMP + GDP + phosphate + 2 H(+). It participates in purine metabolism; AMP biosynthesis via de novo pathway; AMP from IMP: step 1/2. Plays an important role in the de novo pathway of purine nucleotide biosynthesis. Catalyzes the first committed step in the biosynthesis of AMP from IMP. The protein is Adenylosuccinate synthetase of Klebsiella pneumoniae subsp. pneumoniae (strain ATCC 700721 / MGH 78578).